The sequence spans 316 residues: Adenine deaminase (316 aa).

Zn(2+)-binding residues include His-14, His-16, and His-194. Glu-197 functions as the Proton donor in the catalytic mechanism. Zn(2+) is bound at residue Asp-275. Residue Asp-276 coordinates substrate.

Belongs to the metallo-dependent hydrolases superfamily. Adenosine and AMP deaminases family. Adenine deaminase type 2 subfamily. Zn(2+) serves as cofactor.

It catalyses the reaction adenine + H2O + H(+) = hypoxanthine + NH4(+). Catalyzes the hydrolytic deamination of adenine to hypoxanthine. Plays an important role in the purine salvage pathway and in nitrogen catabolism. The chain is Adenine deaminase from Pseudomonas entomophila (strain L48).